Consider the following 242-residue polypeptide: Glucosamine-6-phosphate deaminase (242 aa).

Asp71 acts as the Proton acceptor; for enolization step in catalysis. Asn142 acts as the For ring-opening step in catalysis. The active-site Proton acceptor; for ring-opening step is His144. Glu149 functions as the For ring-opening step in the catalytic mechanism.

This sequence belongs to the glucosamine/galactosamine-6-phosphate isomerase family. NagB subfamily.

The enzyme catalyses alpha-D-glucosamine 6-phosphate + H2O = beta-D-fructose 6-phosphate + NH4(+). The protein operates within amino-sugar metabolism; N-acetylneuraminate degradation; D-fructose 6-phosphate from N-acetylneuraminate: step 5/5. Catalyzes the reversible isomerization-deamination of glucosamine 6-phosphate (GlcN6P) to form fructose 6-phosphate (Fru6P) and ammonium ion. The chain is Glucosamine-6-phosphate deaminase from Malacoplasma penetrans (strain HF-2) (Mycoplasma penetrans).